Consider the following 202-residue polypeptide: CASP-like protein 1U4 (202 aa).

Residues 1 to 10 (MCLPAKWLHP) lie on the Cytoplasmic side of the membrane. The chain crosses the membrane as a helical span at residues 11 to 31 (VSLIFRVAGIGLAAVSAAAML). Residues 32 to 56 (TASQCTVYADYGWRPRTVTYSDFPA) lie on the Extracellular side of the membrane. A helical transmembrane segment spans residues 57–77 (FVYLVAATAIATLLEAVALFL). Over 78 to 94 (SWSKKGKSKKSWRVLTM) the chain is Cytoplasmic. Residues 95 to 115 (LLLGAVVPALLYTSAGAAFAV) form a helical membrane-spanning segment. Topologically, residues 116 to 146 (GWEDIYYYLEPIGRRFSVCRSSVAGGRFCEH) are extracellular. Residues 147–167 (VHVSMWLALGAAVAVSFAEFL) traverse the membrane as a helical segment. The Cytoplasmic segment spans residues 168–202 (TTFRWCHGSGSCSDSDSDSDSDSESGCGHGCHCKH).

Belongs to the Casparian strip membrane proteins (CASP) family. As to quaternary structure, homodimer and heterodimers.

The protein resides in the cell membrane. The sequence is that of CASP-like protein 1U4 from Sorghum bicolor (Sorghum).